A 130-amino-acid chain; its full sequence is Putative protein ZNF815 (130 aa).

This chain is Putative protein ZNF815 (ZNF815P), found in Homo sapiens (Human).